Consider the following 835-residue polypeptide: Protein translocase subunit SecA (835 aa).

Residues Q85, G103–T107, and D492 each bind ATP. Zn(2+) is bound by residues C819, C821, C830, and C831.

This sequence belongs to the SecA family. Monomer and homodimer. Part of the essential Sec protein translocation apparatus which comprises SecA, SecYEG and auxiliary proteins SecDF. Other proteins may also be involved. Zn(2+) is required as a cofactor.

The protein resides in the cell membrane. It localises to the cytoplasm. The enzyme catalyses ATP + H2O + cellular proteinSide 1 = ADP + phosphate + cellular proteinSide 2.. In terms of biological role, part of the Sec protein translocase complex. Interacts with the SecYEG preprotein conducting channel. Has a central role in coupling the hydrolysis of ATP to the transfer of proteins into and across the cell membrane, serving as an ATP-driven molecular motor driving the stepwise translocation of polypeptide chains across the membrane. This chain is Protein translocase subunit SecA, found in Clostridium botulinum (strain Kyoto / Type A2).